Reading from the N-terminus, the 407-residue chain is Tyrosine--tRNA ligase (407 aa).

Y36 provides a ligand contact to L-tyrosine. The short motif at 41–50 (PTADSLHIGH) is the 'HIGH' region element. 2 residues coordinate L-tyrosine: Y169 and Q173. The short motif at 229–233 (KMGKT) is the 'KMSKS' region element. K232 is a binding site for ATP. Residues 341–407 (KGILDILVET…KKSYNRIVIE (67 aa)) form the S4 RNA-binding domain.

It belongs to the class-I aminoacyl-tRNA synthetase family. TyrS type 1 subfamily. Homodimer.

Its subcellular location is the cytoplasm. It catalyses the reaction tRNA(Tyr) + L-tyrosine + ATP = L-tyrosyl-tRNA(Tyr) + AMP + diphosphate + H(+). Its function is as follows. Catalyzes the attachment of tyrosine to tRNA(Tyr) in a two-step reaction: tyrosine is first activated by ATP to form Tyr-AMP and then transferred to the acceptor end of tRNA(Tyr). The protein is Tyrosine--tRNA ligase of Clostridium tetani (strain Massachusetts / E88).